Consider the following 651-residue polypeptide: DNA ligase (651 aa).

NAD(+) contacts are provided by residues 32-36, 75-76, and E106; these read DAEYD and SL. The active-site N6-AMP-lysine intermediate is K108. NAD(+)-binding residues include R129, E164, K271, and K295. Zn(2+)-binding residues include C389, C392, C405, and C411. In terms of domain architecture, BRCT spans 575–651; sequence SSDSFLNNKI…LDEEQWNRLC (77 aa).

This sequence belongs to the NAD-dependent DNA ligase family. LigA subfamily. Mg(2+) is required as a cofactor. The cofactor is Mn(2+).

It catalyses the reaction NAD(+) + (deoxyribonucleotide)n-3'-hydroxyl + 5'-phospho-(deoxyribonucleotide)m = (deoxyribonucleotide)n+m + AMP + beta-nicotinamide D-nucleotide.. Its function is as follows. DNA ligase that catalyzes the formation of phosphodiester linkages between 5'-phosphoryl and 3'-hydroxyl groups in double-stranded DNA using NAD as a coenzyme and as the energy source for the reaction. It is essential for DNA replication and repair of damaged DNA. The sequence is that of DNA ligase from Wolbachia pipientis subsp. Culex pipiens (strain wPip).